The chain runs to 290 residues: Phosphonopyruvate hydrolase (290 aa).

Residue 40–44 (WGSGF) coordinates substrate. Residue aspartate 54 is the Nucleophile of the active site. Residue aspartate 81 participates in Mg(2+) binding. Residues arginine 155, histidine 186, and arginine 188 each contribute to the substrate site.

Homodimer. Homotetramer. The cofactor is Co(2+). Mg(2+) serves as cofactor. It depends on Mn(2+) as a cofactor.

It catalyses the reaction 3-phosphonopyruvate + H2O = pyruvate + phosphate + H(+). Its activity is regulated as follows. Partially inhibited by EDTA. Activity is restored by Co(2+), and to a lesser extent by Ni(2+) and Mg(2+). Unaffected by Cs(2+) and Ca(2+). Activity is reduced by Mn(2+) and Cu(2+). In terms of biological role, hydrolyzes phosphonopyruvate. Not active towards phosphoenolpyruvate, glycerophosphate, phospho-L-serine or phosphoglycolic acid. In Variovorax sp. (strain Pal2), this protein is Phosphonopyruvate hydrolase.